A 504-amino-acid chain; its full sequence is O-fucosyltransferase 39 (504 aa).

The chain crosses the membrane as a helical; Signal-anchor for type II membrane protein span at residues 11–27; the sequence is WILSMFFFVVLFCNNVS. N-linked (GlcNAc...) asparagine glycosylation is present at N115. Substrate is bound at residue 288 to 290; the sequence is HLR. N-linked (GlcNAc...) asparagine glycans are attached at residues N359 and N460.

The protein belongs to the glycosyltransferase GT106 family.

It localises to the membrane. It participates in glycan metabolism. This chain is O-fucosyltransferase 39, found in Arabidopsis thaliana (Mouse-ear cress).